Here is a 324-residue protein sequence, read N- to C-terminus: Antihemorrhagic factor cMSF (324 aa).

The first 19 residues, Met-1–Ser-19, serve as a signal peptide directing secretion. Cystatin fetuin-A-type domains lie at Val-22 to His-130 and Arg-141 to Val-254. The Cell attachment site motif lies at Arg-23–Asp-25. 7 disulfide bridges follow: Cys-28-Cys-315, Cys-85-Cys-96, Cys-110-Cys-129, Cys-143-Cys-146, Cys-205-Cys-217, Cys-230-Cys-253, and Cys-287-Cys-291. N-linked (GlcNAc...) asparagine glycosylation occurs at Asn-204. N-linked (GlcNAc...) asparagine glycosylation is present at Asn-282.

Homodimer. As to expression, expressed by the liver.

Its subcellular location is the secreted. Suppress hemorrhage induced by metalloproteinases from the same venom (brevilysin-H3, -H4, -H6) and from habu venom (metalloproteinases HR1A and HR1B). The non-hemorrhagic brevilysin-L4 is not inhibited by cMSF. Does not inhibit serine and cysteine proteases such as trypsin, chymotrypsin, thermolysin, and papain. The inhibition may occur by formation of a non-covalent complex between this protein and the proteinases at their metalloproteinase domains. The sequence is that of Antihemorrhagic factor cMSF from Gloydius brevicauda (Korean slamosa snake).